Here is an 882-residue protein sequence, read N- to C-terminus: Isoamylase 2, chloroplastic (882 aa).

The N-terminal 70 residues, 1–70, are a transit peptide targeting the chloroplast; the sequence is MAAWSPSVGI…LQSYQFSKIC (70 aa).

This sequence belongs to the glycosyl hydrolase 13 family. As to quaternary structure, associates with ISA1 to form the heteromultimeric complex Iso1 required for amylopectin synthesis.

The protein resides in the plastid. Its subcellular location is the chloroplast. The protein operates within glycan biosynthesis; starch biosynthesis. Its function is as follows. Involved in the trimming of pre-amylopectin chains. Accelerates the crystallization of nascent amylopectin molecules during starch synthesis. ISA1 and ISA2 work exclusively together as a multimeric holoenzyme. ISA1-ISA2 removes preferentially branches that are very close to other branches. This Arabidopsis thaliana (Mouse-ear cress) protein is Isoamylase 2, chloroplastic (ISA2).